A 101-amino-acid chain; its full sequence is ATP synthase subunit c (101 aa).

A run of 2 helical transmembrane segments spans residues 35–55 (IGAG…GLIG) and 81–101 (GISE…IFVV).

The protein belongs to the ATPase C chain family. In terms of assembly, F-type ATPases have 2 components, F(1) - the catalytic core - and F(0) - the membrane proton channel. F(1) has five subunits: alpha(3), beta(3), gamma(1), delta(1), epsilon(1). F(0) has three main subunits: a(1), b(2) and c(10-14). The alpha and beta chains form an alternating ring which encloses part of the gamma chain. F(1) is attached to F(0) by a central stalk formed by the gamma and epsilon chains, while a peripheral stalk is formed by the delta and b chains.

It is found in the cell membrane. F(1)F(0) ATP synthase produces ATP from ADP in the presence of a proton or sodium gradient. F-type ATPases consist of two structural domains, F(1) containing the extramembraneous catalytic core and F(0) containing the membrane proton channel, linked together by a central stalk and a peripheral stalk. During catalysis, ATP synthesis in the catalytic domain of F(1) is coupled via a rotary mechanism of the central stalk subunits to proton translocation. Its function is as follows. Key component of the F(0) channel; it plays a direct role in translocation across the membrane. A homomeric c-ring of between 10-14 subunits forms the central stalk rotor element with the F(1) delta and epsilon subunits. This Mycoplasma capricolum subsp. capricolum (strain California kid / ATCC 27343 / NCTC 10154) protein is ATP synthase subunit c.